The following is a 510-amino-acid chain: Probable cytosol aminopeptidase (510 aa).

Residues Lys254 and Asp259 each coordinate Mn(2+). Lys266 is an active-site residue. Residues Asp277, Asp336, and Glu338 each contribute to the Mn(2+) site. Arg340 is a catalytic residue. Positions 487-510 (AQPVKASPKTRPARKSTPAAKTRA) are disordered.

It belongs to the peptidase M17 family. The cofactor is Mn(2+).

Its subcellular location is the cytoplasm. It carries out the reaction Release of an N-terminal amino acid, Xaa-|-Yaa-, in which Xaa is preferably Leu, but may be other amino acids including Pro although not Arg or Lys, and Yaa may be Pro. Amino acid amides and methyl esters are also readily hydrolyzed, but rates on arylamides are exceedingly low.. The enzyme catalyses Release of an N-terminal amino acid, preferentially leucine, but not glutamic or aspartic acids.. Functionally, presumably involved in the processing and regular turnover of intracellular proteins. Catalyzes the removal of unsubstituted N-terminal amino acids from various peptides. This Polaromonas naphthalenivorans (strain CJ2) protein is Probable cytosol aminopeptidase.